We begin with the raw amino-acid sequence, 201 residues long: 3-isopropylmalate dehydratase small subunit (201 aa).

It belongs to the LeuD family. LeuD type 1 subfamily. As to quaternary structure, heterodimer of LeuC and LeuD.

It carries out the reaction (2R,3S)-3-isopropylmalate = (2S)-2-isopropylmalate. The protein operates within amino-acid biosynthesis; L-leucine biosynthesis; L-leucine from 3-methyl-2-oxobutanoate: step 2/4. Its function is as follows. Catalyzes the isomerization between 2-isopropylmalate and 3-isopropylmalate, via the formation of 2-isopropylmaleate. The protein is 3-isopropylmalate dehydratase small subunit of Escherichia coli O45:K1 (strain S88 / ExPEC).